Here is a 330-residue protein sequence, read N- to C-terminus: UDP-glucose 4-epimerase (330 aa).

NAD(+)-binding positions include 11–12 (YI), 31–36 (DALYTG), 51–52 (DI), 73–77 (FAAYS), N92, S117, Y141, K145, and F169. 2 residues coordinate substrate: S117 and Y141. The active-site Proton acceptor is Y141. Substrate is bound by residues N170, 189–190 (HL), 206–208 (TIF), R221, and 282–285 (RGGD).

It belongs to the NAD(P)-dependent epimerase/dehydratase family. In terms of assembly, homodimer. The cofactor is NAD(+).

The catalysed reaction is UDP-alpha-D-glucose = UDP-alpha-D-galactose. It functions in the pathway carbohydrate metabolism; galactose metabolism. Involved in the metabolism of galactose. Catalyzes the conversion of UDP-galactose (UDP-Gal) to UDP-glucose (UDP-Glc) through a mechanism involving the transient reduction of NAD. It also could be involved in preparation of carbohydrate residues for incorporation into complex polymers, such as exopolysaccharides. The protein is UDP-glucose 4-epimerase (galE) of Lactobacillus helveticus (Lactobacillus suntoryeus).